The primary structure comprises 89 residues: Small ribosomal subunit protein uS15 (89 aa).

Belongs to the universal ribosomal protein uS15 family. As to quaternary structure, part of the 30S ribosomal subunit. Forms a bridge to the 50S subunit in the 70S ribosome, contacting the 23S rRNA.

One of the primary rRNA binding proteins, it binds directly to 16S rRNA where it helps nucleate assembly of the platform of the 30S subunit by binding and bridging several RNA helices of the 16S rRNA. Its function is as follows. Forms an intersubunit bridge (bridge B4) with the 23S rRNA of the 50S subunit in the ribosome. This is Small ribosomal subunit protein uS15 from Bradyrhizobium sp. (strain ORS 278).